The sequence spans 182 residues: Large ribosomal subunit protein uL6 (182 aa).

The protein belongs to the universal ribosomal protein uL6 family. Part of the 50S ribosomal subunit.

This protein binds to the 23S rRNA, and is important in its secondary structure. It is located near the subunit interface in the base of the L7/L12 stalk, and near the tRNA binding site of the peptidyltransferase center. The polypeptide is Large ribosomal subunit protein uL6 (Methanococcus maripaludis (strain C6 / ATCC BAA-1332)).